We begin with the raw amino-acid sequence, 94 residues long: Beta-defensin 132 (94 aa).

The first 22 residues, 1-22 (MKFLLLVLAALGFLTQVIPASA), serve as a signal peptide directing secretion. Disulfide bonds link Cys-27–Cys-55 and Cys-39–Cys-56. Positions 72 to 94 (GNHWQSRRNTQRKDKKQQTTVTS) are disordered. Residues 76 to 86 (QSRRNTQRKDK) show a composition bias toward basic residues.

It belongs to the beta-defensin family.

Its subcellular location is the secreted. Its function is as follows. Has antibacterial activity. This is Beta-defensin 132 (DEFB132) from Gorilla gorilla gorilla (Western lowland gorilla).